A 268-amino-acid polypeptide reads, in one-letter code: Small ribosomal subunit protein eS1 (268 aa).

Disordered stretches follow at residues 1–21 (MAVG…KKKV) and 238–268 (GGGK…QEAV).

It belongs to the eukaryotic ribosomal protein eS1 family. As to quaternary structure, component of the small ribosomal subunit. Mature ribosomes consist of a small (40S) and a large (60S) subunit. The 40S subunit contains about 33 different proteins and 1 molecule of RNA (18S). The 60S subunit contains about 49 different proteins and 3 molecules of RNA (28S, 5.8S and 5S).

The protein resides in the cytoplasm. In terms of biological role, essential for oogenesis; required for late follicle cell development. The protein is Small ribosomal subunit protein eS1 of Drosophila ananassae (Fruit fly).